The primary structure comprises 86 residues: Large ribosomal subunit protein bL27 (86 aa).

Residues 1-24 (MAHKKGTGSTRNGRDSNSKRLGVK) are disordered.

This sequence belongs to the bacterial ribosomal protein bL27 family.

This is Large ribosomal subunit protein bL27 from Prochlorococcus marinus (strain MIT 9312).